We begin with the raw amino-acid sequence, 148 residues long: Large ribosomal subunit protein bL9 (148 aa).

This sequence belongs to the bacterial ribosomal protein bL9 family.

Its function is as follows. Binds to the 23S rRNA. The chain is Large ribosomal subunit protein bL9 from Parafrankia sp. (strain EAN1pec).